We begin with the raw amino-acid sequence, 197 residues long: Recombination protein RecR (197 aa).

The C4-type zinc finger occupies 56–71 (CQQCRTLTEQALCNIC). The 96-residue stretch at 79 to 174 (KELCIVETPA…KVSRIAHGIP (96 aa)) folds into the Toprim domain.

It belongs to the RecR family.

Functionally, may play a role in DNA repair. It seems to be involved in an RecBC-independent recombinational process of DNA repair. It may act with RecF and RecO. This Saccharophagus degradans (strain 2-40 / ATCC 43961 / DSM 17024) protein is Recombination protein RecR.